Consider the following 452-residue polypeptide: tRNA modification GTPase MnmE (452 aa).

Positions 23, 81, and 120 each coordinate (6S)-5-formyl-5,6,7,8-tetrahydrofolate. The region spanning 217–373 (GIKTAIIGQT…LVLRINQMYL (157 aa)) is the TrmE-type G domain. Residue asparagine 227 coordinates K(+). GTP-binding positions include 227-232 (NVGKSS), 246-252 (TDIPGTT), and 271-274 (DTAG). Serine 231 provides a ligand contact to Mg(2+). 3 residues coordinate K(+): threonine 246, isoleucine 248, and threonine 251. Threonine 252 lines the Mg(2+) pocket. Position 452 (lysine 452) interacts with (6S)-5-formyl-5,6,7,8-tetrahydrofolate.

This sequence belongs to the TRAFAC class TrmE-Era-EngA-EngB-Septin-like GTPase superfamily. TrmE GTPase family. As to quaternary structure, homodimer. Heterotetramer of two MnmE and two MnmG subunits. It depends on K(+) as a cofactor.

It is found in the cytoplasm. Its function is as follows. Exhibits a very high intrinsic GTPase hydrolysis rate. Involved in the addition of a carboxymethylaminomethyl (cmnm) group at the wobble position (U34) of certain tRNAs, forming tRNA-cmnm(5)s(2)U34. This Mycoplasma mycoides subsp. mycoides SC (strain CCUG 32753 / NCTC 10114 / PG1) protein is tRNA modification GTPase MnmE.